We begin with the raw amino-acid sequence, 92 residues long: Alpha-defensin 25 (92 aa).

A signal peptide spans 1–19 (MKTLVLLSALALLAFQVQA). A propeptide spanning residues 20-57 (DPIQNRDEESKIDEQPGKEDQAVSVSFGDPEGSSLQEE) is cleaved from the precursor. The span at 24–40 (NRDEESKIDEQPGKEDQ) shows a compositional bias: basic and acidic residues. The tract at residues 24–53 (NRDEESKIDEQPGKEDQAVSVSFGDPEGSS) is disordered. 3 cysteine pairs are disulfide-bonded: cysteine 63–cysteine 92, cysteine 65–cysteine 80, and cysteine 70–cysteine 91.

It belongs to the alpha-defensin family.

The protein localises to the secreted. Its function is as follows. May have microbicidal activities. The polypeptide is Alpha-defensin 25 (Defa25) (Mus musculus (Mouse)).